Reading from the N-terminus, the 106-residue chain is Replication restart protein PriB (106 aa).

The SSB domain occupies 4 to 103 (TNRLVLSGTV…LHAEQIEFID (100 aa)).

This sequence belongs to the PriB family. As to quaternary structure, homodimer. Interacts with PriA and DnaT. Component of the replication restart primosome. Primosome assembly occurs via a 'hand-off' mechanism. PriA binds to replication forks, subsequently PriB then DnaT bind; DnaT then displaces ssDNA to generate the helicase loading substrate.

In terms of biological role, involved in the restart of stalled replication forks, which reloads the replicative helicase on sites other than the origin of replication; the PriA-PriB pathway is the major replication restart pathway. During primosome assembly it facilitates complex formation between PriA and DnaT on DNA; stabilizes PriA on DNA. Stimulates the DNA unwinding activity of PriA helicase. The sequence is that of Replication restart protein PriB from Yersinia enterocolitica serotype O:8 / biotype 1B (strain NCTC 13174 / 8081).